A 490-amino-acid chain; its full sequence is Cytochrome P450 71D11 (490 aa).

Position 427 (Cys427) interacts with heme.

This sequence belongs to the cytochrome P450 family. Heme is required as a cofactor.

The protein is Cytochrome P450 71D11 (CYP71D11) of Lotus japonicus (Lotus corniculatus var. japonicus).